Reading from the N-terminus, the 210-residue chain is Large ribosomal subunit protein uL3 (210 aa).

A disordered region spans residues 131–155; the sequence is GPMSHGSKYHRRVGSMSATTDPGRT.

Belongs to the universal ribosomal protein uL3 family. Part of the 50S ribosomal subunit. Forms a cluster with proteins L14 and L19.

Functionally, one of the primary rRNA binding proteins, it binds directly near the 3'-end of the 23S rRNA, where it nucleates assembly of the 50S subunit. This is Large ribosomal subunit protein uL3 from Thermoanaerobacter sp. (strain X514).